The sequence spans 102 residues: RNA-binding protein Hfq (102 aa).

A Sm domain is found at 9-68 (DPFLNALRRERVPVSIYLVNGIKLQGQIESFDQFVILLKNTVSQMVYKHAISTVVPSRPV). The segment at 63–102 (VPSRPVSHHSNNAGGGSSNYHHGGSAQGSSAPQQDSDDAE) is disordered. The span at 70–86 (HHSNNAGGGSSNYHHGG) shows a compositional bias: low complexity.

The protein belongs to the Hfq family. In terms of assembly, homohexamer.

Functionally, RNA chaperone that binds small regulatory RNA (sRNAs) and mRNAs to facilitate mRNA translational regulation in response to envelope stress, environmental stress and changes in metabolite concentrations. Also binds with high specificity to tRNAs. This Klebsiella pneumoniae (strain 342) protein is RNA-binding protein Hfq.